A 212-amino-acid polypeptide reads, in one-letter code: ER lumen protein-retaining receptor 1 (212 aa).

Over 1–4 (MNLF) the chain is Lumenal. The helical transmembrane segment at 5–24 (RFLGDLSHLLAIILLLLKIW) threads the bilayer. Over 25–32 (KSRSCAGI) the chain is Cytoplasmic. The chain crosses the membrane as a helical span at residues 33 to 52 (SGKSQVLFAVVFTARYLDLF). Residues 47-48 (RY) form an interaction with the K-D-E-L motif on target proteins region. Residues 53 to 58 (TNYISL) lie on the Lumenal side of the membrane. The chain crosses the membrane as a helical span at residues 59–79 (YNTCMKVVYIACSFTTVWMIY). Residues 80-92 (SKFKATYDGNHDT) lie on the Cytoplasmic side of the membrane. A helical membrane pass occupies residues 93–110 (FRVEFLVIPTAILAFLVN). The Lumenal portion of the chain corresponds to 111-116 (HDFTPL). The chain crosses the membrane as a helical span at residues 117–135 (EILWTFSIYLESVAILPQL). Residues 136–149 (FMVSKTGEAETITS) lie on the Cytoplasmic side of the membrane. Residues 150 to 168 (HYLFALGVYRTLYLFNWIW) traverse the membrane as a helical segment. The segment at 159-169 (RTLYLFNWIWR) is interaction with the K-D-E-L motif on target proteins. The Lumenal portion of the chain corresponds to 169–178 (RYHFEGFFDL). Residues 179–199 (IAIVAGLVQTVLYCDFFYLYI) traverse the membrane as a helical segment. Topologically, residues 200–212 (TKVLKGKKLSLPA) are cytoplasmic. The interval 204 to 207 (KGKK) is important for recycling of cargo proteins with the sequence motif K-D-E-L from the Golgi to the endoplasmic reticulum. Phosphoserine; by PKA is present on serine 209.

Belongs to the ERD2 family. As to quaternary structure, upon ligand binding the receptor oligomerizes and interacts with components of the transport machinery such as ARFGAP1 and ARF1. Post-translationally, phosphorylation by PKA at Ser-209 is required for endoplasmic reticulum retention function.

The protein localises to the golgi apparatus membrane. It localises to the cytoplasmic vesicle. It is found in the COPI-coated vesicle membrane. Its subcellular location is the endoplasmic reticulum membrane. The protein resides in the endoplasmic reticulum-Golgi intermediate compartment membrane. Its function is as follows. Receptor for the C-terminal sequence motif K-D-E-L that is present on endoplasmic reticulum resident proteins and that mediates their recycling from the Golgi back to the endoplasmic reticulum. The protein is ER lumen protein-retaining receptor 1 (KDELR1) of Bos taurus (Bovine).